A 1001-amino-acid chain; its full sequence is Open rectifier potassium channel protein 1 (1001 aa).

Topologically, residues 1-6 (MSPNRW) are cytoplasmic. The helical transmembrane segment at 7-27 (ILLLIFYISYLMFGAAIYYHI) threads the bilayer. The N-linked (GlcNAc...) asparagine glycan is linked to Asn-58. Residues 95–111 (AFFFAFTVCSTVGYGNI) constitute an intramembrane region (pore-forming). Residues 120–140 (MIMIAYSVIGIPVNGILFAGL) traverse the membrane as a helical segment. Residues 141 to 170 (GEYFGRTFEAIYRRYKKYKMSTDMHYVPPQ) are Cytoplasmic-facing. A helical transmembrane segment spans residues 171-191 (LGLITTVVIALIPGIALFLLL). An intramembrane region (pore-forming) is located at residues 208-224 (LYYSYVTTTTIGFGDYV). The chain crosses the membrane as a helical span at residues 244–264 (IFVIVWFIFSLGYLVMIMTFI). Over 265-1001 (TRGLQSKKLA…TGSSGAPAEK (737 aa)) the chain is Cytoplasmic. Phosphoserine is present on residues Ser-332, Ser-373, Ser-562, and Ser-565. Residues 591 to 668 (SQSYLRNGRG…QAPSARRGSM (78 aa)) form a disordered region. A phosphoserine mark is found at Ser-685, Ser-691, and Ser-715. Disordered stretches follow at residues 768-795 (GGAA…EPPQ) and 830-1001 (SPTG…PAEK). A compositionally biased stretch (low complexity) spans 832-841 (TGGAATAPAA). Residues 855–873 (AANQSQITAGPSNAPTVQS) show a composition bias toward polar residues. The span at 911–926 (RRLSLRPSPLARELSP) shows a compositional bias: low complexity. A compositionally biased stretch (polar residues) spans 961 to 983 (RPSTSSTHSPLSRIVQISQAQRK). The span at 984–1001 (SSMPSAAATGSSGAPAEK) shows a compositional bias: low complexity.

This sequence belongs to the two pore domain potassium channel (TC 1.A.1.8) family. Widespread expression in adult, strongest expression in muscle, brain and ovary. Also present at low levels in larva and embryo.

Its subcellular location is the membrane. Its function is as follows. Background potassium channel. Rectification is dependent on external potassium concentration. Acts as an outwardly rectifying channel but as external potassium levels increase, this is reversed. This is Open rectifier potassium channel protein 1 (Ork1) from Drosophila melanogaster (Fruit fly).